The following is a 400-amino-acid chain: Phosphoglycerate kinase (400 aa).

Residues 20–22, arginine 35, 58–61, arginine 115, and arginine 155 each bind substrate; these read DLN and HQGR. ATP contacts are provided by residues glutamate 330 and 356-359; that span reads GGDT.

Belongs to the phosphoglycerate kinase family. In terms of assembly, monomer.

The protein resides in the cytoplasm. It carries out the reaction (2R)-3-phosphoglycerate + ATP = (2R)-3-phospho-glyceroyl phosphate + ADP. It participates in carbohydrate degradation; glycolysis; pyruvate from D-glyceraldehyde 3-phosphate: step 2/5. The sequence is that of Phosphoglycerate kinase from Haloarcula marismortui (strain ATCC 43049 / DSM 3752 / JCM 8966 / VKM B-1809) (Halobacterium marismortui).